A 986-amino-acid polypeptide reads, in one-letter code: Regulator of telomere elongation helicase 1 homolog (986 aa).

Residues 7 to 326 enclose the Helicase ATP-binding domain; the sequence is AGIPVHFPFE…KEMLLELEKA (320 aa). 42–49 contributes to the ATP binding site; sequence SPTGTGKT. C148, C166, C175, and C211 together coordinate [4Fe-4S] cluster. The DEAH box signature appears at 254–257; it reads DEGH. Phosphothreonine is present on T875.

It belongs to the helicase family. RAD3/XPD subfamily.

It is found in the nucleus. The catalysed reaction is ATP + H2O = ADP + phosphate + H(+). Functionally, a probable ATP-dependent DNA helicase implicated in DNA repair and the maintenance of genomic stability. Acts as an anti-recombinase to counteract toxic recombination and limit crossover during meiosis. Regulates meiotic recombination and crossover homeostasis by physically dissociating strand invasion events and thereby promotes noncrossover repair by meiotic synthesis dependent strand annealing (SDSA) as well as disassembly of D loop recombination intermediates. The protein is Regulator of telomere elongation helicase 1 homolog of Drosophila grimshawi (Hawaiian fruit fly).